A 98-amino-acid polypeptide reads, in one-letter code: UPF0251 protein Sbal_3699 (98 aa).

This sequence belongs to the UPF0251 family.

The protein is UPF0251 protein Sbal_3699 of Shewanella baltica (strain OS155 / ATCC BAA-1091).